A 110-amino-acid chain; its full sequence is B3 domain-containing protein LOC_Os02g10420 (110 aa).

The segment at residues 1–104 (MSAMLNENVP…VLSVTVHKAD (104 aa)) is a DNA-binding region (TF-B3).

The protein localises to the nucleus. The sequence is that of B3 domain-containing protein LOC_Os02g10420 from Oryza sativa subsp. japonica (Rice).